The chain runs to 284 residues: UPF0276 protein Ping_0944 (284 aa).

The protein belongs to the UPF0276 family.

The protein is UPF0276 protein Ping_0944 of Psychromonas ingrahamii (strain DSM 17664 / CCUG 51855 / 37).